Reading from the N-terminus, the 569-residue chain is MDEEARAAGCSPAPPRAPAASCGAAAELCLCSPTGVEGIEQVPGCPCFEDAGAVVVSGEAPEGPGVLCSGDGAELKLAEQGALDVRLGSPAVGIHEQQLLHRGTSGSDEAGAINEISPVEVSPSEASSNLDTAGAIGGSPLMLESLPETSDTRGCEQEVMPGVVVGSSNRDASSEVGVESECGSDADGRNGLGEGELVSSVDGGGAEKSSKVTGVLSEEGVDGMETALEPCVASVGSITQVEEGVDRMETSLDDSEASDGSTTQDFDTDVETESSGSSIEEQDMGYGVHIPHTEQAICEVARGNKSSEVKSSDRMSSVTLPTLILASGAAMLPHPSKVLTGGEDAYFIACDGWFGVADGVGQWSFEGINAGLYARELMDGCKKAVMESQGAPEMRTEEVLAKAADEARSPGSSTVLVAHFDGQVLHACNIGDSGFLVIRNGEIYQKSKPMTYGFNFPLQIEKGDDPFKLVQKYTIDLQEGDAIVTATDGLFDNVYEEEIAAVISKSLEAGLKPSEIAEFLVARAKEVGRSATCRSPFSDAALAVGYLGYSGGKLDDVTVVVSVVRKSEV.

Disordered stretches follow at residues Gly166 to Val212 and Ser251 to Ile279. Positions Ser174 to Gly183 are enriched in low complexity. One can recognise a PPM-type phosphatase domain in the interval Ala329–Val564. Mn(2+)-binding residues include Asp358, Gly359, Asp488, and Asp555.

The protein belongs to the PP2C family. The cofactor is Mg(2+). It depends on Mn(2+) as a cofactor.

It catalyses the reaction O-phospho-L-seryl-[protein] + H2O = L-seryl-[protein] + phosphate. The enzyme catalyses O-phospho-L-threonyl-[protein] + H2O = L-threonyl-[protein] + phosphate. Its function is as follows. May play a role in responses to biotic and abiotic stresses. This Oryza sativa subsp. indica (Rice) protein is Probable protein phosphatase 2C BIPP2C1 (BIPP2C1).